Consider the following 633-residue polypeptide: MDDPECDSTWEDESEEDGEDGQADDTTDEDTGDDDGDAEEARPSLFQSRMTRYRNWRAMQDMQRYRHNYPDLTDQDCNGDMCNLSFYKNEICFQPNGFLIEDILQNWKDNYDLLEENHSYIQWLFPLREPGVNWHAKPLTLKEVEAFKSSKEVRERLVRAYELMLGFYGIQLEDRNTGAVCRAQNFQPRFHNLNSHSHNNLRITRILKSLGELGLEHYQAPLVRFFLEETLVQHKLPSVRQSALDYFLFAVRCRHQRRELVHFAWEHFKPRREFVWGPRDKLRRFRPQTISRPLMGLGQADKDEGPGDPSQEAGTQGRTCGSGRDLSGDSGTAEDLSLLSAKPQDVGTLDGDQRHEAKSPSPKESKKRKLEGNRQEQVPGEPDPQGVSEVEKIALNLEGCALSPTSQEPREAEQPCLVARVANEVRKRRKVEEGAEGDGVASNTQVQASALSPTPSECPESQKDGNGPEDPKSQVGPEDPKSQVGPEDPKSQVGPEDPKSQVGPEDPKGQVEPEDPKGQVGPEDPKGQVGPEDPKGQVGPEDPKSQVGPEDPKSQVEPEDPKSQVEPEDPKSQVEPEDPKSQVGPEDPQSQVGPEQAASKSLGEDPDSDTTGTSMSESEELARIEASVEPPKP.

Met1 carries the post-translational modification N-acetylmethionine. Residues 1–38 (MDDPECDSTWEDESEEDGEDGQADDTTDEDTGDDDGDA) are compositionally biased toward acidic residues. The interval 1 to 44 (MDDPECDSTWEDESEEDGEDGQADDTTDEDTGDDDGDAEEARPS) is disordered. Residues 257-286 (RRELVHFAWEHFKPRREFVWGPRDKLRRFR) carry the Bipartite nuclear localization signal motif. Residues 287 to 390 (PQTISRPLMG…EPDPQGVSEV (104 aa)) are disordered. Phosphoserine is present on residues Ser327, Ser340, Ser361, Ser365, Ser403, and Ser452. Positions 351 to 374 (GDQRHEAKSPSPKESKKRKLEGNR) are enriched in basic and acidic residues. Residues 404–633 (PTSQEPREAE…IEASVEPPKP (230 aa)) are disordered. Residues 441–455 (ASNTQVQASALSPTP) are compositionally biased toward polar residues. 14 tandem repeats follow at residues 467-475 (GPEDPKSQV), 476-484 (GPEDPKSQV), 485-493 (GPEDPKSQV), 494-502 (GPEDPKSQV), 503-511 (GPEDPKGQV), 512-520 (EPEDPKGQV), 521-529 (GPEDPKGQV), 530-538 (GPEDPKGQV), 539-547 (GPEDPKSQV), 548-556 (GPEDPKSQV), 557-565 (EPEDPKSQV), 566-574 (EPEDPKSQV), 575-583 (EPEDPKSQV), and 584-592 (GPEDPQSQV). Residues 467-592 (GPEDPKSQVG…VGPEDPQSQV (126 aa)) are 14 X approximate tandem repeats. Residues 505 to 517 (EDPKGQVEPEDPK) show a composition bias toward basic and acidic residues. The span at 550 to 580 (EDPKSQVEPEDPKSQVEPEDPKSQVEPEDPK) shows a compositional bias: basic and acidic residues. Phosphoserine is present on residues Ser601 and Ser608.

Belongs to the opioid growth factor receptor family. As to expression, expressed in all tissues examined, including brain, heart, lung, liver, kidney and skeletal muscle.

Its subcellular location is the cytoplasm. It localises to the nucleus. Receptor for opioid growth factor (OGF), also known as Met-enkephalin. Seems to be involved in growth regulation. The polypeptide is Opioid growth factor receptor (Ogfr) (Mus musculus (Mouse)).